The following is a 522-amino-acid chain: N-acetylgalactosamine-6-sulfatase (522 aa).

The first 25 residues, 1-25 (MAPVAAATGWRLLLVLSAAGLGAAG), serve as a signal peptide directing secretion. The segment at 27–379 (PQPPNILLLL…PAMLGGQLTD (353 aa)) is catalytic domain. Ca(2+) contacts are provided by D38, D39, and C78. The Nucleophile role is filled by C78. The residue at position 78 (C78) is a 3-oxoalanine (Cys). H141 is a catalytic residue. A glycan (N-linked (GlcNAc...) asparagine) is linked at N203. Positions 288 and 289 each coordinate Ca(2+). A disulfide bridge connects residues C308 and C419. The N-linked (GlcNAc...) asparagine glycan is linked to N423. Cystine bridges form between C489–C518 and C501–C507.

It belongs to the sulfatase family. Homodimer. The cofactor is Ca(2+). In terms of processing, the conversion to 3-oxoalanine (also known as C-formylglycine, FGly), of a serine or cysteine residue in prokaryotes and of a cysteine residue in eukaryotes, is critical for catalytic activity.

It is found in the lysosome. The catalysed reaction is Hydrolysis of the 6-sulfate groups of the N-acetyl-D-galactosamine 6-sulfate units of chondroitin sulfate and of the D-galactose 6-sulfate units of keratan sulfate.. The chain is N-acetylgalactosamine-6-sulfatase (GALNS) from Canis lupus familiaris (Dog).